The following is a 243-amino-acid chain: Ras-related protein Rab-12 (243 aa).

Met1 carries the post-translational modification N-acetylmethionine. The interval 1–36 (MDPSAALHRRPAGGGLGAVSPALSGGQARRRKQPPR) is disordered. Ser20 and Ser24 each carry phosphoserine. GTP is bound by residues Gly51, Val52, Gly53, Lys54, Thr55, Ser72, and Thr73. Thr55 provides a ligand contact to Mg(2+). Short sequence motifs (switch) lie at residues 64 to 78 (DTFC…GVDF) and 96 to 113 (DTAG…YYRS). Residues Thr73 and Asp96 each coordinate Mg(2+). Gly99 is a binding site for GTP. Ser105 carries the phosphoserine modification. GTP is bound by residues Asn154, Lys155, Asp157, Ser185, Ala186, and Lys187. S-geranylgeranyl cysteine attachment occurs at residues Cys242 and Cys243.

Belongs to the small GTPase superfamily. Rab family. As to quaternary structure, interacts with RABIF and OPTN. Interacts with LRRK2; interaction facilitates phosphorylation of Ser-105. Interacts with GDI1, GDI2 and CHM; these interactions are disrupted by phosphorylation on Ser-105. Interacts with RILPL1 and RILPL2; these interactions are dependent on phosphorylation of Ser-105. Mg(2+) is required as a cofactor. In terms of processing, phosphorylation of Ser-105 in the switch II region by LRRK2 prevents the association of RAB regulatory proteins, including CHM and RAB GDP dissociation inhibitors GDI1 and GDI2. As to expression, highest levels in skeletal and cardiac muscle. Also found in comparable amounts in brain, spinal cord and lung. Also detected in testis where it is expressed by Sertoli cells of the seminiferous tubules (at protein level).

It localises to the recycling endosome membrane. The protein localises to the lysosome membrane. The protein resides in the golgi apparatus membrane. It is found in the cytoplasmic vesicle. Its subcellular location is the autophagosome. The catalysed reaction is GTP + H2O = GDP + phosphate + H(+). Regulated by guanine nucleotide exchange factors (GEFs) including DENND3 which promote the exchange of bound GDP for free GTP. Regulated by GTPase activating proteins (GAPs) which increase the GTP hydrolysis activity. Inhibited by GDP dissociation inhibitors (GDIs). The small GTPases Rab are key regulators of intracellular membrane trafficking, from the formation of transport vesicles to their fusion with membranes. Rabs cycle between an inactive GDP-bound form and an active GTP-bound form that is able to recruit to membranes different sets of downstream effectors directly responsible for vesicle formation, movement, tethering and fusion. RAB12 may play a role in protein transport from recycling endosomes to lysosomes regulating, for instance, the degradation of the transferrin receptor. Involved in autophagy. This is Ras-related protein Rab-12 from Rattus norvegicus (Rat).